We begin with the raw amino-acid sequence, 473 residues long: Mitochondrial distribution and morphology protein 10 (473 aa).

This sequence belongs to the MDM10 family. In terms of assembly, component of the ER-mitochondria encounter structure (ERMES) or MDM complex, composed of MMM1, MDM10, MDM12 and MDM34. Associates with the mitochondrial outer membrane sorting assembly machinery SAM(core) complex.

The protein localises to the mitochondrion outer membrane. Component of the ERMES/MDM complex, which serves as a molecular tether to connect the endoplasmic reticulum and mitochondria. Components of this complex are involved in the control of mitochondrial shape and protein biogenesis and may function in phospholipid exchange. MDM10 is involved in the late assembly steps of the general translocase of the mitochondrial outer membrane (TOM complex). Functions in the TOM40-specific route of the assembly of outer membrane beta-barrel proteins, including the association of TOM40 with the receptor TOM22 and small TOM proteins. Can associate with the SAM(core) complex as well as the MDM12-MMM1 complex, both involved in late steps of the major beta-barrel assembly pathway, that is responsible for biogenesis of all outer membrane beta-barrel proteins. May act as a switch that shuttles between both complexes and channels precursor proteins into the TOM40-specific pathway. Plays a role in mitochondrial morphology and in the inheritance of mitochondria. In Candida albicans (strain WO-1) (Yeast), this protein is Mitochondrial distribution and morphology protein 10.